A 738-amino-acid chain; its full sequence is Propionyl-CoA carboxylase alpha chain, mitochondrial (738 aa).

The 448-residue stretch at 62–509 (KFDKILIANR…TTKYLPEVYP (448 aa)) folds into the Biotin carboxylation domain. ATP contacts are provided by residues Lys-177, 209-270 (SREI…PRHI), Glu-261, and Asn-296. The 198-residue stretch at 181 to 378 (KKIATAARVS…IVQQMLRVAY (198 aa)) folds into the ATP-grasp domain. Mg(2+)-binding residues include Glu-336, Glu-349, and Asn-351. Glu-336, Glu-349, and Asn-351 together coordinate Mn(2+). The active site involves Arg-353. Biotin is bound at residue Phe-409. A Biotinyl-binding domain is found at 663–738 (KAKVDLSTVV…DEGEVLVELE (76 aa)). Lys-704 carries the N6-biotinyllysine modification.

As to quaternary structure, the holoenzyme is a dodecamer composed of 6 alpha subunits and 6 beta subunits. Interacts with sir-2.2. Biotin serves as cofactor. Requires Mg(2+) as cofactor. It depends on Mn(2+) as a cofactor. The biotin cofactor is covalently attached to the C-terminal biotinyl-binding domain and is required for the catalytic activity.

The protein resides in the mitochondrion matrix. The catalysed reaction is propanoyl-CoA + hydrogencarbonate + ATP = (S)-methylmalonyl-CoA + ADP + phosphate + H(+). It catalyses the reaction butanoyl-CoA + hydrogencarbonate + ATP = (2S)-ethylmalonyl-CoA + ADP + phosphate + H(+). It functions in the pathway metabolic intermediate metabolism; propanoyl-CoA degradation; succinyl-CoA from propanoyl-CoA: step 1/3. This is one of the 2 subunits of the biotin-dependent propionyl-CoA carboxylase (PCC), a mitochondrial enzyme involved in the catabolism of odd chain fatty acids, branched-chain amino acids isoleucine, threonine, methionine, and valine and other metabolites. Propionyl-CoA carboxylase catalyzes the carboxylation of propionyl-CoA/propanoyl-CoA to D-methylmalonyl-CoA/(S)-methylmalonyl-CoA. Within the holoenzyme, the alpha subunit catalyzes the ATP-dependent carboxylation of the biotin carried by the biotin carboxyl carrier (BCC) domain, while the beta subunit then transfers the carboxyl group from carboxylated biotin to propionyl-CoA. Propionyl-CoA carboxylase also significantly acts on butyryl-CoA/butanoyl-CoA, which is converted to ethylmalonyl-CoA/(2S)-ethylmalonyl-CoA. Other alternative minor substrates include (2E)-butenoyl-CoA/crotonoyl-CoA. This is Propionyl-CoA carboxylase alpha chain, mitochondrial (pcca-1) from Caenorhabditis briggsae.